Reading from the N-terminus, the 180-residue chain is Large ribosomal subunit protein uL5 (180 aa).

This sequence belongs to the universal ribosomal protein uL5 family. Part of the 50S ribosomal subunit; part of the 5S rRNA/L5/L18/L25 subcomplex. Contacts the 5S rRNA and the P site tRNA. Forms a bridge to the 30S subunit in the 70S ribosome.

Its function is as follows. This is one of the proteins that bind and probably mediate the attachment of the 5S RNA into the large ribosomal subunit, where it forms part of the central protuberance. In the 70S ribosome it contacts protein S13 of the 30S subunit (bridge B1b), connecting the 2 subunits; this bridge is implicated in subunit movement. Contacts the P site tRNA; the 5S rRNA and some of its associated proteins might help stabilize positioning of ribosome-bound tRNAs. This is Large ribosomal subunit protein uL5 from Streptococcus thermophilus (strain CNRZ 1066).